The chain runs to 493 residues: Probable cytosol aminopeptidase (493 aa).

2 residues coordinate Mn(2+): lysine 260 and aspartate 265. Lysine 272 is a catalytic residue. Mn(2+)-binding residues include aspartate 283, aspartate 342, and glutamate 344. Arginine 346 is an active-site residue.

Belongs to the peptidase M17 family. The cofactor is Mn(2+).

The protein localises to the cytoplasm. The enzyme catalyses Release of an N-terminal amino acid, Xaa-|-Yaa-, in which Xaa is preferably Leu, but may be other amino acids including Pro although not Arg or Lys, and Yaa may be Pro. Amino acid amides and methyl esters are also readily hydrolyzed, but rates on arylamides are exceedingly low.. The catalysed reaction is Release of an N-terminal amino acid, preferentially leucine, but not glutamic or aspartic acids.. Presumably involved in the processing and regular turnover of intracellular proteins. Catalyzes the removal of unsubstituted N-terminal amino acids from various peptides. The chain is Probable cytosol aminopeptidase from Clostridium perfringens (strain 13 / Type A).